The primary structure comprises 1173 residues: Alpha-mannosidase 2 (1173 aa).

The disordered stretch occupies residues 1-21 (MPFSSYIGNSRRSSTGGGTGG). At 1–50 (MPFSSYIGNSRRSSTGGGTGGWGQSLLPTALSKSKLAINRKPRKRTLVVN) the chain is on the cytoplasmic side. A helical; Signal-anchor membrane pass occupies residues 51–71 (FIFANFFVIALTVSLLFFLLT). At 72–1173 (LFHFGVPGPI…AYKLELRPHK (1102 aa)) the chain is on the lumenal side. N106 carries an N-linked (GlcNAc...) asparagine glycan. Zn(2+) contacts are provided by H162 and D164. N-linked (GlcNAc...) asparagine glycosylation is present at N262. D276 contributes to the Zn(2+) binding site. D276 functions as the Nucleophile in the catalytic mechanism. N467 carries N-linked (GlcNAc...) asparagine glycosylation. Position 564 (H564) interacts with Zn(2+). 6 N-linked (GlcNAc...) asparagine glycosylation sites follow: N675, N772, N782, N991, N1098, and N1108.

This sequence belongs to the glycosyl hydrolase 38 family. In terms of assembly, homodimer; disulfide-linked. Interacts with GALT1. Requires Zn(2+) as cofactor. Glycosylated.

It localises to the golgi apparatus membrane. It catalyses the reaction N(4)-{beta-D-GlcNAc-(1-&gt;2)-alpha-D-Man-(1-&gt;3)-[alpha-D-Man-(1-&gt;3)-[alpha-D-Man-(1-&gt;6)]-alpha-D-Man-(1-&gt;6)]-beta-D-Man-(1-&gt;4)-beta-D-GlcNAc-(1-&gt;4)-beta-D-GlcNAc}-L-asparaginyl-[protein] + 2 H2O = 2 alpha-D-mannopyranose + an N(4)-{beta-D-GlcNAc-(1-&gt;2)-alpha-D-Man-(1-&gt;3)-[alpha-D-Man-(1-&gt;6)]-beta-D-Man-(1-&gt;4)-beta-D-GlcNAc-(1-&gt;4)-beta-D-GlcNAc}-L-asparaginyl-[protein]. It participates in protein modification; protein glycosylation. With respect to regulation, inhibited by 1 mM Cu(2+) and by the class II alpha-mannosidase inhibitor swainsonine. Catalyzes the first committed step in the biosynthesis of complex N-glycans. It controls conversion of high mannose to complex N-glycans; the final hydrolytic step in the N-glycan maturation pathway. Converts GlcNAcMan(5)GlcNAc(2) (Man5Gn) into GlcNAcMan(3)GlcNAc(2) (MGn) by sequential removal of two alpha1,6- and alpha1,3-linked mannose residues from the alpha1,6-mannose branch of the substrate. To a lesser extent, also able to cleave beta1,2-xylosylated Man5Gn-glycopeptide (Man5GnX-GP) and pyridylaminated substrates Man5Gn-PA and Man5GnX-PA, but not active toward Man5-glycopeptide. Required for resistance to salt stress. This is Alpha-mannosidase 2 from Arabidopsis thaliana (Mouse-ear cress).